We begin with the raw amino-acid sequence, 619 residues long: Chaperone protein HscA homolog (619 aa).

It belongs to the heat shock protein 70 family.

In terms of biological role, chaperone involved in the maturation of iron-sulfur cluster-containing proteins. Has a low intrinsic ATPase activity which is markedly stimulated by HscB. This is Chaperone protein HscA homolog from Azotobacter vinelandii.